Here is a 141-residue protein sequence, read N- to C-terminus: Hemoglobin subunit alpha-2 (141 aa).

In terms of domain architecture, Globin spans 1–141 (VLSPADKNNV…VSTVLTSKYR (141 aa)). Residue H58 coordinates O2. H87 lines the heme b pocket.

It belongs to the globin family. As to quaternary structure, heterotetramer of two alpha chains and two beta chains. In terms of tissue distribution, red blood cells.

Involved in oxygen transport from the lung to the various peripheral tissues. The sequence is that of Hemoglobin subunit alpha-2 from Varecia variegata (Black-and-white ruffed lemur).